The primary structure comprises 102 residues: Citrate lyase acyl carrier protein (102 aa).

Ser-14 bears the O-(phosphoribosyl dephospho-coenzyme A)serine mark.

The protein belongs to the CitD family. Oligomer with a subunit composition of (alpha,beta,gamma)6.

It localises to the cytoplasm. Functionally, covalent carrier of the coenzyme of citrate lyase. This is Citrate lyase acyl carrier protein from Streptococcus pyogenes serotype M18 (strain MGAS8232).